The chain runs to 1385 residues: MSEKTKKTKRLDDLNFFDFDAIKLGIASPEQIMAWSHGEVKKPETINYRTLKPERDGLFCERIFGPTKDYECSCGKYRWVKYKGMQCDRCGVEITEAKVRRERMGHLELAVPVAHVWFLRKNPSRIGIMLDMRITDLERVVYYASYVVVEDCIDSVTGRTDYKKGELLTDVQVREARKKHGSRLKVDIGAPAVKKLLSDIDFDKEIPTLHVQLAETQSELERTKLIRRIKTMEEFKASGNRPEWMILSVLPVIPPDLRPLVPLDGGRFAASDLNDLYRRIINRNNRLKHIESLRAPEVMIYNEKRLLQEAVDALIENGARGKFFIGAGGRPLKSLSDVIKGKHGRFRQNLLGKRVDYSGRSVIVVGPSLKLHQCGLPKLMALELFKPFIIGELMKKEGVTLKAAKKMLERVRPEIWDILEQVTKNHPVMLNRAPTLHRLGIQAFEPVLIEGKAIQLHPLTCAAFNADFDGDQMAVHVPLSLEAQLEARTLMLATNNILSPASGRPIAAPSHDIVMGISFLTKVKLNDFGEGAVFGSMEEALMAYAYGKVSLHARIKVRGITAIKEDGMNEKDLKNVNTWKDYTTVGKIIFNNNLPEGWPYVNGAVGKKELAAIIDECYKSKKYGKYETVQLLDRIMKLGYNYATRSGLSISIADMIVPAAKQKYIDAAKKRIKEIQGQAEAGIITEGERYNKVIDIWTRVTDDVAVEQFKEMKKFEEAPYSGEGQRFNSVFLMADSGARGSRQQVRQLAGMRGLMAKPQKKLTGGQGEIIESPITSNFREGLSVLEYFISTHGGRKGLSDTALKTAEAGYLTRRLIDVAHNLVVMEEDCGTTNGVVVSSLMSGEEVVEPIEERILGRTSLEDVIVKIKKADGKEEEKTIIKEGDSITLEQSKLVKKYGVQNLRIRSVLTCESKNGVCGKCYGVSLVSGNISNVGDSVGIIAAQSIGEPGTQLTLRTFHIGGAASRMLSQSQAVAELGGKVTFKDIKVITNRFDNKICISRNGAIFVEAANGTIKEYKIQYGATLHIADKVTVEKGTLMAEWDPHSIPVLSETEGTARLTDVSEGITLQEERNKVTGVIERKITASRMGKKNPRIVIEGKGGKKVSLPLPVDTILLVENGEDVLAGDILAKIAKASGGTKDITSGLPRIAELFEARKPRNAAIMSEFAGVVSLETSPKGLVEIVVRSEETGQVKQYAVPQGKHLVVYEGDHVGVGEALTDGAIDPHDVLRVKGIKEVQEFLLNAIQEVYRLQGVTINDRHIEVIVRQMLGNVKIVDAGDTPLLKGEIVSRATLLKHNAQAEKEGKKIAVGDPILLGISKASLASDSFISAASFQETTKVLTDAAITGQVDTLQGLKENVIVGHLIPAGTGISAREFTKEFEAAKKK.

Zn(2+) contacts are provided by C72, C74, C87, and C90. D467, D469, and D471 together coordinate Mg(2+). Residues C829, C910, C917, and C920 each contribute to the Zn(2+) site.

Belongs to the RNA polymerase beta' chain family. The RNAP catalytic core consists of 2 alpha, 1 beta, 1 beta' and 1 omega subunit. When a sigma factor is associated with the core the holoenzyme is formed, which can initiate transcription. Requires Mg(2+) as cofactor. Zn(2+) serves as cofactor.

It catalyses the reaction RNA(n) + a ribonucleoside 5'-triphosphate = RNA(n+1) + diphosphate. Its function is as follows. DNA-dependent RNA polymerase catalyzes the transcription of DNA into RNA using the four ribonucleoside triphosphates as substrates. In Elusimicrobium minutum (strain Pei191), this protein is DNA-directed RNA polymerase subunit beta'.